The following is a 458-amino-acid chain: Ammonium transporter Rh type B (458 aa).

Residues Met-1–Leu-13 lie on the Cytoplasmic side of the membrane. A helical membrane pass occupies residues Gln-14–Val-34. Over Arg-35–Tyr-61 the chain is Extracellular. Asn-49 carries N-linked (GlcNAc...) asparagine glycosylation. The helical transmembrane segment at Pro-62–Leu-82 threads the bilayer. Residues Gln-83–Gly-86 are Cytoplasmic-facing. Residues Phe-87 to Val-107 traverse the membrane as a helical segment. At Gln-108–Glu-124 the chain is on the extracellular side. Residues Ser-125–Gly-145 traverse the membrane as a helical segment. The Cytoplasmic segment spans residues Lys-146 to Pro-149. Residues Ala-150–Leu-170 form a helical membrane-spanning segment. Residues Leu-171–Asp-178 lie on the Extracellular side of the membrane. The helical transmembrane segment at Ala-179–Tyr-201 threads the bilayer. Over Arg-202–Asp-219 the chain is Cytoplasmic. Residues Leu-220–Leu-240 form a helical membrane-spanning segment. At Thr-241–Ala-251 the chain is on the extracellular side. A helical membrane pass occupies residues Leu-252–Val-272. Over Gly-273–His-282 the chain is Cytoplasmic. The chain crosses the membrane as a helical span at residues Ile-283 to Thr-303. A topological domain (extracellular) is located at residue Pro-304. The chain crosses the membrane as a helical span at residues Phe-305–Phe-325. Residues Thr-326–Gly-346 lie on the Cytoplasmic side of the membrane. The helical transmembrane segment at Met-347–Ala-367 threads the bilayer. At Tyr-368–Gln-393 the chain is on the extracellular side. A helical membrane pass occupies residues Leu-394–Leu-414. Residues Leu-415–Ala-458 lie on the Cytoplasmic side of the membrane. The tract at residues Lys-416–Pro-424 is interaction with ANK3. A Basolateral sorting signal motif is present at residues Tyr-429–Gln-432. Residues Gly-439–Ala-458 are disordered. Residues Glu-444–Ala-458 are compositionally biased toward basic and acidic residues.

It belongs to the ammonium transporter (TC 2.A.49) family. Rh subfamily. As to quaternary structure, interacts (via C-terminus) with ANK2 and ANK3; required for targeting to the basolateral membrane. Post-translationally, N-glycosylated.

It localises to the cell membrane. The protein localises to the basolateral cell membrane. The catalysed reaction is NH4(+)(in) = NH4(+)(out). It carries out the reaction methylamine(out) = methylamine(in). The enzyme catalyses CO2(out) = CO2(in). In terms of biological role, ammonium transporter involved in the maintenance of acid-base homeostasis. Transports ammonium and its related derivative methylammonium across the basolateral plasma membrane of epithelial cells likely contributing to renal transepithelial ammonia transport and ammonia metabolism. May transport either NH4(+) or NH3 ammonia species predominantly mediating an electrogenic NH4(+) transport. May act as a CO2 channel providing for renal acid secretion. In Macaca mulatta (Rhesus macaque), this protein is Ammonium transporter Rh type B (RHBG).